A 541-amino-acid chain; its full sequence is Putative asparagine synthetase [glutamine-hydrolyzing] 1 (541 aa).

Cys2 (for GATase activity) is an active-site residue. Residues 2-213 enclose the Glutamine amidotransferase type-2 domain; sequence CSISGIIVKD…PNSQLIYYLD (212 aa). Residues 68 to 72, 92 to 94, and Asp116 each bind L-glutamine; these read RLAIV and NGE. Residues Val289 and 363-364 contribute to the ATP site; that span reads SG.

Belongs to the asparagine synthetase family.

The catalysed reaction is L-aspartate + L-glutamine + ATP + H2O = L-asparagine + L-glutamate + AMP + diphosphate + H(+). Its pathway is amino-acid biosynthesis; L-asparagine biosynthesis; L-asparagine from L-aspartate (L-Gln route): step 1/1. This chain is Putative asparagine synthetase [glutamine-hydrolyzing] 1, found in Methanocaldococcus jannaschii (strain ATCC 43067 / DSM 2661 / JAL-1 / JCM 10045 / NBRC 100440) (Methanococcus jannaschii).